The primary structure comprises 257 residues: 3-methyl-2-oxobutanoate hydroxymethyltransferase (257 aa).

Positions 42 and 86 each coordinate Mg(2+). 3-methyl-2-oxobutanoate is bound by residues aspartate 42–serine 43, aspartate 86, and lysine 116. Glutamate 118 lines the Mg(2+) pocket. Glutamate 185 functions as the Proton acceptor in the catalytic mechanism.

This sequence belongs to the PanB family. As to quaternary structure, homodecamer; pentamer of dimers. Mg(2+) serves as cofactor.

It localises to the cytoplasm. It catalyses the reaction 3-methyl-2-oxobutanoate + (6R)-5,10-methylene-5,6,7,8-tetrahydrofolate + H2O = 2-dehydropantoate + (6S)-5,6,7,8-tetrahydrofolate. It functions in the pathway cofactor biosynthesis; (R)-pantothenate biosynthesis; (R)-pantoate from 3-methyl-2-oxobutanoate: step 1/2. In terms of biological role, catalyzes the reversible reaction in which hydroxymethyl group from 5,10-methylenetetrahydrofolate is transferred onto alpha-ketoisovalerate to form ketopantoate. The protein is 3-methyl-2-oxobutanoate hydroxymethyltransferase of Prochlorococcus marinus subsp. pastoris (strain CCMP1986 / NIES-2087 / MED4).